A 98-amino-acid polypeptide reads, in one-letter code: NADH-ubiquinone oxidoreductase chain 4L (98 aa).

Helical transmembrane passes span 2–22 (PSIS…MLVF), 29–49 (SLLC…LTIM), and 61–81 (ILLL…LVMM).

Belongs to the complex I subunit 4L family. In terms of assembly, core subunit of respiratory chain NADH dehydrogenase (Complex I) which is composed of 45 different subunits.

The protein resides in the mitochondrion inner membrane. The enzyme catalyses a ubiquinone + NADH + 5 H(+)(in) = a ubiquinol + NAD(+) + 4 H(+)(out). Functionally, core subunit of the mitochondrial membrane respiratory chain NADH dehydrogenase (Complex I) which catalyzes electron transfer from NADH through the respiratory chain, using ubiquinone as an electron acceptor. Part of the enzyme membrane arm which is embedded in the lipid bilayer and involved in proton translocation. The polypeptide is NADH-ubiquinone oxidoreductase chain 4L (MT-ND4L) (Lepilemur seali (Seal's sportive lemur)).